A 517-amino-acid polypeptide reads, in one-letter code: 2-isopropylmalate synthase (517 aa).

Residues 5–268 form the Pyruvate carboxyltransferase domain; that stretch reads IIIFDTTLRD…DTRINTQEIH (264 aa). Positions 14, 202, 204, and 238 each coordinate Mn(2+). Residues 393-517 form a regulatory domain region; the sequence is SLDVITSQTI…ADLKSHKISQ (125 aa).

Belongs to the alpha-IPM synthase/homocitrate synthase family. LeuA type 1 subfamily. Homodimer. Requires Mn(2+) as cofactor.

The protein localises to the cytoplasm. The catalysed reaction is 3-methyl-2-oxobutanoate + acetyl-CoA + H2O = (2S)-2-isopropylmalate + CoA + H(+). Its pathway is amino-acid biosynthesis; L-leucine biosynthesis; L-leucine from 3-methyl-2-oxobutanoate: step 1/4. Functionally, catalyzes the condensation of the acetyl group of acetyl-CoA with 3-methyl-2-oxobutanoate (2-ketoisovalerate) to form 3-carboxy-3-hydroxy-4-methylpentanoate (2-isopropylmalate). This is 2-isopropylmalate synthase from Histophilus somni (strain 129Pt) (Haemophilus somnus).